A 350-amino-acid polypeptide reads, in one-letter code: Twinfilin-1 (350 aa).

Position 2 is an N-acetylserine (Ser2). An ADF-H 1 domain is found at 2–139 (SHRTGIQASE…SLHGYKKYLL (138 aa)). 2 positions are modified to phosphoserine: Ser143 and Ser277. The 139-residue stretch at 175–313 (LQGVAFPISR…TADFLYEEVH (139 aa)) folds into the ADF-H 2 domain. Tyr309 is modified (phosphotyrosine). The segment at 316-350 (QHAHKQSFAKPKGPAGKRGIRRLIRGPAETEATTD) is disordered. Phosphothreonine is present on Thr349.

This sequence belongs to the actin-binding proteins ADF family. Twinfilin subfamily. In terms of assembly, interacts with G-actin; ADP-actin form and capping protein (CP). May also be able to interact with TWF2 and phosphoinositides, PI(4,5)P2. When bound to PI(4,5)P2, it is down-regulated. Interacts with ACTG1. Phosphorylated on serine and threonine residues.

The protein resides in the cytoplasm. It localises to the cytoskeleton. In terms of biological role, actin-binding protein involved in motile and morphological processes. Inhibits actin polymerization, likely by sequestering G-actin. By capping the barbed ends of filaments, it also regulates motility. Seems to play an important role in clathrin-mediated endocytosis and distribution of endocytic organelles. The chain is Twinfilin-1 (TWF1) from Pongo abelii (Sumatran orangutan).